The sequence spans 2641 residues: Inverse autotransporter adhesin YeeJ (2641 aa).

A signal peptide spans 1–26 (MGIKLRRLTAGICLVTQLAFPMAAAA). Residues 50-98 (VPYILGALESAQSVAERFGISVAELRKLNQFRTFARGFDNVRQGDELDV) form the LysM domain. Positions 99–118 (PAQVSEKKLTPPPGNSSDNL) are disordered. Positions 125-400 (TSQQIGSLLA…SRYDLVDRNN (276 aa)) are inverse autotransporter. Residues 513–605 (QKDSSVSLST…GVDAAKAPAV (93 aa)) are invasin 3 domain. 17 consecutive Big-1 domains span residues 617 to 711 (HSSI…AGFI), 721 to 815 (IATL…VSFV), 822 to 913 (QVDL…VNFI), 920 to 1017 (ALTL…MTFV), 1024 to 1116 (VVVL…VNIA), 1123 to 1220 (QVTL…VTFV), 1227 to 1319 (VVVL…VNIA), 1326 to 1423 (QVTL…VTFV), 1430 to 1523 (QVVL…VHFI), 1531 to 1633 (IIEL…SINV), 1641 to 1734 (HLTL…VTYV), 1741 to 1837 (EISL…VNFT), 1844 to 1941 (QVNL…VTLI), 1948 to 2032 (KLTS…PTEV), 2048 to 2139 (FTSL…LEAI), 2142 to 2236 (KLTL…VKVT), and 2244 to 2336 (VASF…ITLV). A C-type lectin domain region spans residues 2538–2641 (KSWWVNAGDA…FAHATCYKNL (104 aa)).

This sequence belongs to the intimin/invasin family.

Its subcellular location is the cell outer membrane. Functionally, a probable inverse autotransporter, it may be involved in biofilm formation and cell adhesion. May bind peptidoglycan via its LysM domain. Upon overexpression shows increased mature biofilm formation. The protein is Inverse autotransporter adhesin YeeJ of Escherichia coli O17:K52:H18 (strain UMN026 / ExPEC).